Reading from the N-terminus, the 135-residue chain is MPPNLTGYYRFVSQKNLEDYLQALNVNMALRKIALLLKPDKEIDQRGNHMTVKTLSTFRNYVLEFEVGVEFEEDLRTVDGRKCQTIVTWEEEQLVCVQKGEVPNRGWRLWLEEEMLYQEVTARDAVCQCVFRKVK.

It belongs to the calycin superfamily. Fatty-acid binding protein (FABP) family. In terms of tissue distribution, kidney.

It is found in the cytoplasm. Its function is as follows. Intracellular transport of retinol. The chain is Retinol-binding protein 5 (RBP5) from Bos taurus (Bovine).